The following is a 664-amino-acid chain: tRNA uridine 5-carboxymethylaminomethyl modification enzyme MnmG (664 aa).

FAD is bound by residues 14–19, Val126, and Ser183; that span reads GGGHSG. 277–291 lines the NAD(+) pocket; the sequence is GPRYCPSIEDKIDRF. Residue Gln374 coordinates FAD.

The protein belongs to the MnmG family. Homodimer. Heterotetramer of two MnmE and two MnmG subunits. It depends on FAD as a cofactor.

The protein resides in the cytoplasm. Its function is as follows. NAD-binding protein involved in the addition of a carboxymethylaminomethyl (cmnm) group at the wobble position (U34) of certain tRNAs, forming tRNA-cmnm(5)s(2)U34. The chain is tRNA uridine 5-carboxymethylaminomethyl modification enzyme MnmG from Salinibacter ruber (strain DSM 13855 / M31).